Consider the following 302-residue polypeptide: Homoserine O-acetyltransferase (302 aa).

C142 functions as the Acyl-thioester intermediate in the catalytic mechanism. Positions 163 and 192 each coordinate substrate. Catalysis depends on H235, which acts as the Proton acceptor. Residue E237 is part of the active site. Substrate is bound at residue R249.

The protein belongs to the MetA family.

It is found in the cytoplasm. The enzyme catalyses L-homoserine + acetyl-CoA = O-acetyl-L-homoserine + CoA. It functions in the pathway amino-acid biosynthesis; L-methionine biosynthesis via de novo pathway; O-acetyl-L-homoserine from L-homoserine: step 1/1. Transfers an acetyl group from acetyl-CoA to L-homoserine, forming acetyl-L-homoserine. In Bacillus licheniformis (strain ATCC 14580 / DSM 13 / JCM 2505 / CCUG 7422 / NBRC 12200 / NCIMB 9375 / NCTC 10341 / NRRL NRS-1264 / Gibson 46), this protein is Homoserine O-acetyltransferase.